Here is a 445-residue protein sequence, read N- to C-terminus: Glycine--tRNA ligase (445 aa).

The substrate site is built by K97 and E145. ATP contacts are provided by residues 177 to 179 (RNE), 187 to 192 (FRTCEF), 262 to 263 (EI), and 308 to 311 (GLTR). 192 to 196 (FEQME) lines the substrate pocket. A substrate-binding site is contributed by 304–308 (ETSLG).

The protein belongs to the class-II aminoacyl-tRNA synthetase family. As to quaternary structure, homodimer.

The protein localises to the cytoplasm. It catalyses the reaction tRNA(Gly) + glycine + ATP = glycyl-tRNA(Gly) + AMP + diphosphate. Catalyzes the attachment of glycine to tRNA(Gly). In Borrelia hermsii (strain HS1 / DAH), this protein is Glycine--tRNA ligase.